Consider the following 523-residue polypeptide: Xanthotoxin 5-hydroxylase CYP82C2 (523 aa).

A helical transmembrane segment spans residues 1 to 21 (MDTSLFSLFVPILVFVFIALF). Residue cysteine 462 participates in heme binding.

This sequence belongs to the cytochrome P450 family. The cofactor is heme.

It localises to the membrane. It carries out the reaction xanthotoxin + reduced [NADPH--hemoprotein reductase] + O2 = 5-hydroxyxanthotoxin + oxidized [NADPH--hemoprotein reductase] + H2O + 2 H(+). The catalysed reaction is indole-3-carbonyl nitrile + reduced [NADPH--hemoprotein reductase] + O2 = 4-hydroxy-indole-3-carbonyl nitrile + oxidized [NADPH--hemoprotein reductase] + H2O + H(+). In terms of biological role, involved in the biosynthetic pathway to 4-hydroxyindole-3-carbonyl nitrile (4-OH-ICN), a cyanogenic metabolite required for inducible pathogen defense. Converts indole-3-carbonyl nitrile (ICN) into 4-OH-ICN. Can hydroxylate xanthotoxin (8-methoxypsoralen) to form 5-hydroxyxanthotoxin (5-hydroxy-8-methoxypsoralen) in vivo and in vitro. The protein is Xanthotoxin 5-hydroxylase CYP82C2 of Arabidopsis thaliana (Mouse-ear cress).